We begin with the raw amino-acid sequence, 350 residues long: Hepatocyte nuclear factor 3-gamma (350 aa).

The fork-head DNA-binding region spans Ala-116–Leu-207. The interval Glu-217–Pro-276 is disordered. Over residues Ala-226–Ser-249 the composition is skewed to low complexity. The span at Pro-250–Glu-259 shows a compositional bias: pro residues.

As to quaternary structure, interacts with FOXA2. As to expression, expressed in erythroleukemia and hepatoma cell lines and in liver and pancreas. Not expressed in any other cell lines or tissues examined.

It localises to the nucleus. Functionally, transcription factor that is thought to act as a 'pioneer' factor opening the compacted chromatin for other proteins through interactions with nucleosomal core histones and thereby replacing linker histones at target enhancer and/or promoter sites. Originally described as a transcription activator for a number of liver genes such as AFP, albumin, tyrosine aminotransferase, PEPCK, etc. Interacts with the cis-acting regulatory regions of these genes. Involved in glucose homeostasis; binds to and activates transcription from the G6PC1 promoter. Binds to the CYP3A4 promoter and activates its transcription in cooperation with CEBPA. Binds to the CYP3A7 promoter together with members of the CTF/NF-I family. Involved in regulation of neuronal-specific transcription. May be involved in regulation of spermatogenesis. The chain is Hepatocyte nuclear factor 3-gamma (FOXA3) from Homo sapiens (Human).